Here is a 352-residue protein sequence, read N- to C-terminus: Holliday junction branch migration complex subunit RuvB (352 aa).

The tract at residues 4-191 is large ATPase domain (RuvB-L); the sequence is TDKLAAPARV…FGIVARLEFY (188 aa). ATP contacts are provided by residues Leu30, Arg31, Gly72, Lys75, Thr76, Thr77, 138 to 140, Arg181, Tyr191, and Arg228; that span reads EDY. Position 76 (Thr76) interacts with Mg(2+). The interval 192–262 is small ATPAse domain (RuvB-S); it reads TADELARIVT…MADAALAMLD (71 aa). Residues 265–352 form a head domain (RuvB-H) region; it reads SVGFDLMDRK…SGASELFGDA (88 aa). Arg301, Arg320, and Arg325 together coordinate DNA.

The protein belongs to the RuvB family. In terms of assembly, homohexamer. Forms an RuvA(8)-RuvB(12)-Holliday junction (HJ) complex. HJ DNA is sandwiched between 2 RuvA tetramers; dsDNA enters through RuvA and exits via RuvB. An RuvB hexamer assembles on each DNA strand where it exits the tetramer. Each RuvB hexamer is contacted by two RuvA subunits (via domain III) on 2 adjacent RuvB subunits; this complex drives branch migration. In the full resolvosome a probable DNA-RuvA(4)-RuvB(12)-RuvC(2) complex forms which resolves the HJ.

It localises to the cytoplasm. It catalyses the reaction ATP + H2O = ADP + phosphate + H(+). In terms of biological role, the RuvA-RuvB-RuvC complex processes Holliday junction (HJ) DNA during genetic recombination and DNA repair, while the RuvA-RuvB complex plays an important role in the rescue of blocked DNA replication forks via replication fork reversal (RFR). RuvA specifically binds to HJ cruciform DNA, conferring on it an open structure. The RuvB hexamer acts as an ATP-dependent pump, pulling dsDNA into and through the RuvAB complex. RuvB forms 2 homohexamers on either side of HJ DNA bound by 1 or 2 RuvA tetramers; 4 subunits per hexamer contact DNA at a time. Coordinated motions by a converter formed by DNA-disengaged RuvB subunits stimulates ATP hydrolysis and nucleotide exchange. Immobilization of the converter enables RuvB to convert the ATP-contained energy into a lever motion, pulling 2 nucleotides of DNA out of the RuvA tetramer per ATP hydrolyzed, thus driving DNA branch migration. The RuvB motors rotate together with the DNA substrate, which together with the progressing nucleotide cycle form the mechanistic basis for DNA recombination by continuous HJ branch migration. Branch migration allows RuvC to scan DNA until it finds its consensus sequence, where it cleaves and resolves cruciform DNA. This is Holliday junction branch migration complex subunit RuvB from Cupriavidus necator (strain ATCC 17699 / DSM 428 / KCTC 22496 / NCIMB 10442 / H16 / Stanier 337) (Ralstonia eutropha).